The sequence spans 284 residues: ATP synthase subunit a (284 aa).

The next 5 helical transmembrane spans lie at 47-67, 108-128, 156-176, 233-253, and 254-274; these read AFHL…LIFF, VAPL…MDLV, VPTA…ILII, MIFI…SLPW, and AIFH…LVIV.

The protein belongs to the ATPase A chain family. As to quaternary structure, F-type ATPases have 2 components, CF(1) - the catalytic core - and CF(0) - the membrane proton channel. CF(1) has five subunits: alpha(3), beta(3), gamma(1), delta(1), epsilon(1). CF(0) has three main subunits: a(1), b(2) and c(9-12). The alpha and beta chains form an alternating ring which encloses part of the gamma chain. CF(1) is attached to CF(0) by a central stalk formed by the gamma and epsilon chains, while a peripheral stalk is formed by the delta and b chains.

The protein localises to the cell inner membrane. In terms of biological role, key component of the proton channel; it plays a direct role in the translocation of protons across the membrane. The polypeptide is ATP synthase subunit a (Ruthia magnifica subsp. Calyptogena magnifica).